The primary structure comprises 493 residues: Glycerol kinase 2 (493 aa).

Serine 12 is a binding site for ADP. Residues serine 12 and threonine 13 each contribute to the ATP site. Residue serine 12 coordinates sn-glycerol 3-phosphate. An ADP-binding site is contributed by lysine 16. Residues arginine 82, glutamate 83, tyrosine 134, and aspartate 243 each coordinate sn-glycerol 3-phosphate. 5 residues coordinate glycerol: arginine 82, glutamate 83, tyrosine 134, aspartate 243, and glutamine 244. The ADP site is built by threonine 265 and glycine 308. 3 residues coordinate ATP: threonine 265, glycine 308, and asparagine 312. Asparagine 413 contacts ADP.

It belongs to the FGGY kinase family. Homotetramer and homodimer (in equilibrium).

It catalyses the reaction glycerol + ATP = sn-glycerol 3-phosphate + ADP + H(+). It functions in the pathway polyol metabolism; glycerol degradation via glycerol kinase pathway; sn-glycerol 3-phosphate from glycerol: step 1/1. With respect to regulation, activated by phosphorylation and inhibited by fructose 1,6-bisphosphate (FBP). Key enzyme in the regulation of glycerol uptake and metabolism. Catalyzes the phosphorylation of glycerol to yield sn-glycerol 3-phosphate. This Clostridium tetani (strain Massachusetts / E88) protein is Glycerol kinase 2.